The chain runs to 318 residues: Carnitine monooxygenase reductase subunit (318 aa).

In terms of domain architecture, FAD-binding FR-type spans 5 to 107 (YEMFPAVVTR…SEPKNLFPLA (103 aa)). Residues 233 to 318 (FTVVLAKSNQ…AKGKKLVLDL (86 aa)) form the 2Fe-2S ferredoxin-type domain. Residues cysteine 267, cysteine 272, cysteine 275, and cysteine 305 each contribute to the [2Fe-2S] cluster site.

The protein belongs to the PDR/VanB family. CntB subfamily. As to quaternary structure, composed of an oxygenase subunit (cntA) and a reductase subunit (cntB). It depends on FMN as a cofactor. Requires [2Fe-2S] cluster as cofactor.

The catalysed reaction is (R)-carnitine + NADH + O2 + H(+) = (3R)-3-hydroxy-4-oxobutanoate + trimethylamine + NAD(+) + H2O. The enzyme catalyses (R)-carnitine + NADPH + O2 + H(+) = (3R)-3-hydroxy-4-oxobutanoate + trimethylamine + NADP(+) + H2O. Its pathway is amine and polyamine metabolism; carnitine metabolism. Its function is as follows. Converts carnitine to trimethylamine and malic semialdehyde. The protein is Carnitine monooxygenase reductase subunit of Acinetobacter baumannii (strain ATCC 19606 / DSM 30007 / JCM 6841 / CCUG 19606 / CIP 70.34 / NBRC 109757 / NCIMB 12457 / NCTC 12156 / 81).